The primary structure comprises 107 residues: DNA-directed RNA polymerase subunit omega (107 aa).

Residues Met81–Gly107 form a disordered region.

It belongs to the RNA polymerase subunit omega family. As to quaternary structure, the RNAP catalytic core consists of 2 alpha, 1 beta, 1 beta' and 1 omega subunit. When a sigma factor is associated with the core the holoenzyme is formed, which can initiate transcription.

It carries out the reaction RNA(n) + a ribonucleoside 5'-triphosphate = RNA(n+1) + diphosphate. Its function is as follows. Promotes RNA polymerase assembly. Latches the N- and C-terminal regions of the beta' subunit thereby facilitating its interaction with the beta and alpha subunits. The sequence is that of DNA-directed RNA polymerase subunit omega from Alkalilimnicola ehrlichii (strain ATCC BAA-1101 / DSM 17681 / MLHE-1).